The following is a 113-amino-acid chain: Flagellar hook-basal body complex protein FliE (113 aa).

It belongs to the FliE family.

Its subcellular location is the bacterial flagellum basal body. This Rhizobium etli (strain ATCC 51251 / DSM 11541 / JCM 21823 / NBRC 15573 / CFN 42) protein is Flagellar hook-basal body complex protein FliE.